The following is a 144-amino-acid chain: Protein cornichon homolog 1 (144 aa).

The Cytoplasmic portion of the chain corresponds to 1–10; that stretch reads MAFTFAAFCY. A helical membrane pass occupies residues 11–31; the sequence is MLALLLTAALIFFAIWHIIAF. Topologically, residues 32–56 are lumenal; it reads DELKTDYKNPIDQCNTLNPLVLPEY. A helical membrane pass occupies residues 57–77; that stretch reads LIHAFFCVMFLCAAEWLTLGL. The Cytoplasmic portion of the chain corresponds to 78-122; sequence NMPLLAYHIWRYMSRPVMSGPGLYDPTTIMNADILAYCQKEGWCK. A helical transmembrane segment spans residues 123–143; the sequence is LAFYLLAFFYYLYGMIYVLVS. Residue serine 144 is a topological domain, lumenal.

Belongs to the cornichon family. As to quaternary structure, interacts with AREG immature precursor and with immature TGFA, i.e. with a prosegment and lacking full N-glycosylation, but not with the fully N-glycosylated form. In the Golgi apparatus, may form a complex with GORASP55 and transmembrane TGFA.

The protein resides in the endoplasmic reticulum membrane. The protein localises to the golgi apparatus membrane. In terms of biological role, involved in the selective transport and maturation of TGF-alpha family proteins. The chain is Protein cornichon homolog 1 (CNIH1) from Bos taurus (Bovine).